The following is a 762-amino-acid chain: Cellulose synthase-like protein H2 (762 aa).

Residues 1 to 15 (MAVVAAAAATGSTTR) are compositionally biased toward low complexity. The interval 1–39 (MAVVAAAAATGSTTRSGGGGGEGTRSGRKKPPPPPLQER) is disordered. 2 helical membrane-spanning segments follow: residues 47–67 (AWAW…LLAL) and 81–101 (GVWR…ALNV). Residues D180 and D470 contribute to the active site. 6 helical membrane-spanning segments follow: residues 541–561 (LAYL…CYGL), 582–602 (FSVP…EYMA), 619–639 (IISV…SLGL), 673–693 (LPVF…VTVG), 708–728 (APGI…FPFV), and 739–759 (GIPW…VTFC).

This sequence belongs to the glycosyltransferase 2 family. Plant cellulose synthase-like H subfamily.

The protein resides in the golgi apparatus membrane. Thought to be a Golgi-localized beta-glycan synthase that polymerize the backbones of noncellulosic polysaccharides (hemicelluloses) of plant cell wall. The protein is Cellulose synthase-like protein H2 (CSLH2) of Oryza sativa subsp. japonica (Rice).